Consider the following 528-residue polypeptide: Protein spinster homolog 1 (528 aa).

The tract at residues 1-49 (MAGSDTAPFLSQADDPDDGPVPGTPGLPGSTGNPKSEEPEVPDQEGLQR) is disordered. N-acetylalanine is present on alanine 2. Transmembrane regions (helical) follow at residues 50–70 (ITGLSPGRSALIVAVLCYINL), 98–118 (GLIQTVFISSYMVLAPVFGYL), 127–147 (LMCGGIAFWSLVTLGSSFIPG), 160–180 (VGVGEASYSTIAPTLIADLFV), 187–207 (MLSIFYFAIPVGSGLGYIAGS), 218–238 (WALRVTPGLGVVAVLLLFLVV), 278–298 (LGFTAVAFVTGSLALWAPAFL), 323–343 (LIFGLITCLTGVLGVGLGVEI), 357–377 (LVCATGLLGSAPFLFLSLACA), 381–401 (IVATYIFIFIGETLLSMNWAI), 421–441 (FQIVLSHLLGDAGSPYLIGLI), and 465–485 (MLCAFVGALGGAAFLGTAIFI). Serine 518 carries the phosphoserine modification.

The protein belongs to the major facilitator superfamily. Spinster (TC 2.A.1.49) family. As to quaternary structure, interacts with BCL2 and BCL2L1.

It is found in the lysosome membrane. The protein resides in the mitochondrion inner membrane. It carries out the reaction a 1-acyl-sn-glycero-3-phosphocholine(out) + H(+)(out) = a 1-acyl-sn-glycero-3-phosphocholine(in) + H(+)(in). The catalysed reaction is 1-hexadecanoyl-sn-glycero-3-phosphocholine(out) + H(+)(out) = 1-hexadecanoyl-sn-glycero-3-phosphocholine(in) + H(+)(in). It catalyses the reaction 1-(9Z-octadecenoyl)-sn-glycero-3-phosphocholine(out) + H(+)(out) = 1-(9Z-octadecenoyl)-sn-glycero-3-phosphocholine(in) + H(+)(in). The enzyme catalyses 1-(5Z,8Z,11Z,14Z-eicosatetraenoyl)-sn-glycero-3-phosphocholine(out) + H(+)(out) = 1-(5Z,8Z,11Z,14Z-eicosatetraenoyl)-sn-glycero-3-phosphocholine(in) + H(+)(in). It carries out the reaction 1-(4Z,7Z,10Z,13Z,16Z,19Z-docosahexaenoyl)-sn-glycero-3-phosphocholine(out) + H(+)(out) = 1-(4Z,7Z,10Z,13Z,16Z,19Z-docosahexaenoyl)-sn-glycero-3-phosphocholine(in) + H(+)(in). The catalysed reaction is a 1-acyl-sn-glycero-3-phosphoethanolamine(out) + H(+)(out) = a 1-acyl-sn-glycero-3-phosphoethanolamine(in) + H(+)(in). It catalyses the reaction 1-(9Z-octadecenoyl)-sn-glycero-3-phosphoethanolamine(out) + H(+)(out) = 1-(9Z-octadecenoyl)-sn-glycero-3-phosphoethanolamine(in) + H(+)(in). The enzyme catalyses 1-acyl-sn-glycero-3-phospho-(1'-sn-glycerol)(out) + H(+)(out) = 1-acyl-sn-glycero-3-phospho-(1'-sn-glycerol)(in) + H(+)(in). It carries out the reaction 1-(9Z-octadecenoyl)-sn-glycero-3-phospho-(1'-sn-glycerol)(out) + H(+)(out) = 1-(9Z-octadecenoyl)-sn-glycero-3-phospho-(1'-sn-glycerol)(in) + H(+)(in). The catalysed reaction is a 1-O-(1Z-alkenyl)-sn-glycero-3-phosphocholine(out) + H(+)(out) = a 1-O-(1Z-alkenyl)-sn-glycero-3-phosphocholine(in) + H(+)(in). It catalyses the reaction 1-(1Z-hexadecenyl)-sn-glycero-3-phosphocholine(out) + H(+)(out) = 1-(1Z-hexadecenyl)-sn-glycero-3-phosphocholine(in) + H(+)(in). The enzyme catalyses a 1-O-(1Z-alkenyl)-sn-glycero-3-phosphoethanolamine(out) + H(+)(out) = a 1-O-(1Z-alkenyl)-sn-glycero-3-phosphoethanolamine(in) + H(+)(in). It carries out the reaction 1-O-(1Z-hexadecenyl)-sn-glycero-3-phosphoethanolamine(out) + H(+)(out) = 1-O-(1Z-hexadecenyl)-sn-glycero-3-phosphoethanolamine(in) + H(+)(in). Plays a critical role in the phospholipid salvage pathway from lysosomes to the cytosol. Mediates the rate-limiting, proton-dependent, lysosomal efflux of lysophospholipids, which can then be reacylated by acyltransferases in the endoplasmic reticulum to form phospholipids. Selective for zwitterionic headgroups such as lysophosphatidylcholine (LPC) and lysophosphatidylethanolamine (LPE), can also transport lysophosphatidylglycerol (LPG), but not other anionic lysophospholipids, sphingosine, nor sphingomyelin. Transports lysophospholipids with saturated, monounsaturated, and polyunsaturated fatty acids, such as 1-hexadecanoyl-sn-glycero-3-phosphocholine, 1-(9Z-octadecenoyl)-sn-glycero-3-phosphocholine and 1-(4Z,7Z,10Z,13Z,16Z,19Z-docosahexaenoyl)-sn-glycero-3-phosphocholine, respectively. Can also transport lysoplasmalogen (LPC with a fatty alcohol) such as 1-(1Z-hexadecenyl)-sn-glycero-3-phosphocholine. Lysosomal LPC could function as intracellular signaling messenger. Essential player in lysosomal homeostasis. Crucial for cell survival under conditions of nutrient limitation. May be involved in necrotic or autophagic cell death. The polypeptide is Protein spinster homolog 1 (SPNS1) (Homo sapiens (Human)).